Here is a 121-residue protein sequence, read N- to C-terminus: uncharacterized protein (121 aa).

3 helical membrane passes run 12–32 (MIGI…HPGV), 35–55 (VIQP…FGGL), and 67–87 (VFVV…YVGD).

Belongs to the sbp family.

It is found in the cell membrane. This is an uncharacterized protein from Mycobacterium bovis (strain ATCC BAA-935 / AF2122/97).